The primary structure comprises 356 residues: Cell division control protein 10 (356 aa).

The region spanning 36-286 (KGFELNVLVV…NNYRKKIFEI (251 aa)) is the Septin-type G domain. The G1 motif stretch occupies residues 46-53 (GRRGLGTS). GTP is bound by residues 46–53 (GRRGLGTS) and T70. A G3 motif region spans residues 93 to 96 (TYHE). The tract at residues 163–166 (PKAD) is G4 motif. Residues 164–172 (KADMYTPDE) and R235 each bind GTP.

It belongs to the TRAFAC class TrmE-Era-EngA-EngB-Septin-like GTPase superfamily. Septin GTPase family. Component of the septin complex.

Septins are GTPases involved in cytokinesis. The septins localize to the site of cleavage and act as a structural scaffold that recruits different components involved in diverse processes at specific stages during the cell cycle. Septins are also involved in cell morphogenesis, chitin deposition, cell cycle regulation, cell compartmentalization and spore wall formation. This chain is Cell division control protein 10 (CDC10), found in Encephalitozoon cuniculi (strain GB-M1) (Microsporidian parasite).